We begin with the raw amino-acid sequence, 311 residues long: Glycine-betaine-binding protein (311 aa).

Positions 1 to 23 are cleaved as a signal peptide; the sequence is MNRLIRSLCLACAGLFAAGLAQA.

The protein belongs to the OsmX family.

It is found in the periplasm. In terms of biological role, binds glycine-betaine. The protein is Glycine-betaine-binding protein of Pseudomonas aeruginosa (strain ATCC 15692 / DSM 22644 / CIP 104116 / JCM 14847 / LMG 12228 / 1C / PRS 101 / PAO1).